Reading from the N-terminus, the 213-residue chain is MGMTSRRARERERLIQRLHEEGIRDPAVLKVIQETPRHIFVDEALSSRAYEDTALPIGFRQTISQPYIVARMTEALLAGGSLQKVLEVGTGSGYQTAILAGLAGLVYTVERIKPLLTQAQARFKHLGISNIRAKCADGLWGWPAYGPYQGILVAAAPREIPQTLLKQLAVGGRMVIPVGASSGTQSLMIVTRTADDFEMKTLERVSFVPLVGE.

S64 is an active-site residue.

The protein belongs to the methyltransferase superfamily. L-isoaspartyl/D-aspartyl protein methyltransferase family.

It is found in the cytoplasm. It catalyses the reaction [protein]-L-isoaspartate + S-adenosyl-L-methionine = [protein]-L-isoaspartate alpha-methyl ester + S-adenosyl-L-homocysteine. Its function is as follows. Catalyzes the methyl esterification of L-isoaspartyl residues in peptides and proteins that result from spontaneous decomposition of normal L-aspartyl and L-asparaginyl residues. It plays a role in the repair and/or degradation of damaged proteins. This Nitrosococcus oceani (strain ATCC 19707 / BCRC 17464 / JCM 30415 / NCIMB 11848 / C-107) protein is Protein-L-isoaspartate O-methyltransferase 1.